Consider the following 425-residue polypeptide: UDP-N-acetylglucosamine 1-carboxyvinyltransferase (425 aa).

22–23 (KN) is a phosphoenolpyruvate binding site. Residue Arg-93 participates in UDP-N-acetyl-alpha-D-glucosamine binding. Cys-117 functions as the Proton donor in the catalytic mechanism. Cys-117 is modified (2-(S-cysteinyl)pyruvic acid O-phosphothioketal). Residues 122–126 (RPVDL), 162–165 (KVSV), Asp-307, and Ile-329 contribute to the UDP-N-acetyl-alpha-D-glucosamine site.

The protein belongs to the EPSP synthase family. MurA subfamily.

It localises to the cytoplasm. The catalysed reaction is phosphoenolpyruvate + UDP-N-acetyl-alpha-D-glucosamine = UDP-N-acetyl-3-O-(1-carboxyvinyl)-alpha-D-glucosamine + phosphate. The protein operates within cell wall biogenesis; peptidoglycan biosynthesis. Functionally, cell wall formation. Adds enolpyruvyl to UDP-N-acetylglucosamine. The chain is UDP-N-acetylglucosamine 1-carboxyvinyltransferase from Pasteurella multocida (strain Pm70).